We begin with the raw amino-acid sequence, 668 residues long: Protein-glutamine gamma-glutamyltransferase (668 aa).

Residues 1–6 (MNAIPR) are Cytoplasmic-facing. A helical membrane pass occupies residues 7–27 (VALVWLLVAQVLVILPHLAYM). Over 28–50 (PLWIAAMWLGCAAWRVQVFRMRA) the chain is Periplasmic. Residues 51-71 (GYPRAWVKLALALLAGAGVWL) traverse the membrane as a helical segment. Over 72–74 (SRG) the chain is Cytoplasmic. Residues 75–95 (SLVGLDAGAVLLIAAFILKLV) traverse the membrane as a helical segment. The Periplasmic segment spans residues 96–103 (EMKTRRDA). 2 consecutive transmembrane segments (helical) span residues 104–124 (LVLV…DDGF) and 125–145 (LAAL…IGLQ). The Cytoplasmic segment spans residues 146–158 (QSAFASRPWPTLR). A helical membrane pass occupies residues 159–179 (LAGGLLLQALPLMLLLFLFFP). The Periplasmic portion of the chain corresponds to 180 to 548 (RLGPLWSLPM…FGGLDPTRLG (369 aa)). The Nucleophile role is filled by Cys404. Residues His448 and Asp464 contribute to the active site. Residues 549-569 (LLLGAAAILSVGLLALFLLKP) traverse the membrane as a helical segment. Residues 570 to 668 (WQGRGDLRSR…TRDGRGEEQA (99 aa)) lie on the Cytoplasmic side of the membrane.

Belongs to the transglutaminase-like superfamily.

The protein resides in the cell inner membrane. It catalyses the reaction L-glutaminyl-[protein] + L-lysyl-[protein] = [protein]-L-lysyl-N(6)-5-L-glutamyl-[protein] + NH4(+). Its function is as follows. Displays transglutaminase activity (TGase) in vitro. Plays a critical role in the viability of P.aeruginosa. Might contribute to an essential function linked to the cell wall. This Pseudomonas aeruginosa (strain ATCC 15692 / DSM 22644 / CIP 104116 / JCM 14847 / LMG 12228 / 1C / PRS 101 / PAO1) protein is Protein-glutamine gamma-glutamyltransferase (tgpA).